The sequence spans 144 residues: Large ribosomal subunit protein uL15 (144 aa).

Residues 1 to 58 are disordered; sequence MQLNDLRSAPGARREKLRPGRGIGSGLGKTGGRGHKGQTSRSGGKIAPGFEGGQQPLH. Positions 21-31 are enriched in gly residues; sequence RGIGSGLGKTG.

It belongs to the universal ribosomal protein uL15 family. Part of the 50S ribosomal subunit.

Functionally, binds to the 23S rRNA. The polypeptide is Large ribosomal subunit protein uL15 (Azotobacter vinelandii (strain DJ / ATCC BAA-1303)).